A 105-amino-acid polypeptide reads, in one-letter code: Iron-sulfur cluster assembly protein CyaY (105 aa).

It belongs to the frataxin family.

In terms of biological role, involved in iron-sulfur (Fe-S) cluster assembly. May act as a regulator of Fe-S biogenesis. The polypeptide is Iron-sulfur cluster assembly protein CyaY (Paraburkholderia phytofirmans (strain DSM 17436 / LMG 22146 / PsJN) (Burkholderia phytofirmans)).